The following is a 307-amino-acid chain: MPTTDYQQVLNDITQEVAPLLSQGKVADYIPALAEVDPEQFSIAIYTTSGETFCAGDCTQQFTIQSVSKVMTLTLALQRYGDELWHRVGKEPSGTAFNSLTQLEFEKGIPRNPFINAGAIVTCDALYSRLSAPMHTMLETFRALSGNRCIAIDKKVANSEYEFRHRNAAMGHLMKSFGNFENEVDDVLWAYFNFCAIELNCIELAKAYNFLANNGIDNTSGKRVLPSRQTKQLNSLLFTSGLYDAAGDFGYRVGMPGKSGVSGTVLAVLPNKFTVAVWSPGLNSFGNSVAGIAALELLSKKLDISIF.

Residues Ser-66, Asn-116, Glu-160, Asn-167, Tyr-191, Tyr-243, and Val-261 each coordinate substrate.

This sequence belongs to the glutaminase family. Homotetramer.

It carries out the reaction L-glutamine + H2O = L-glutamate + NH4(+). The polypeptide is Glutaminase (Pseudoalteromonas translucida (strain TAC 125)).